The primary structure comprises 228 residues: Uracil-DNA glycosylase (228 aa).

Asp71 serves as the catalytic Proton acceptor.

It belongs to the uracil-DNA glycosylase (UDG) superfamily. UNG family.

Its subcellular location is the cytoplasm. The enzyme catalyses Hydrolyzes single-stranded DNA or mismatched double-stranded DNA and polynucleotides, releasing free uracil.. In terms of biological role, excises uracil residues from the DNA which can arise as a result of misincorporation of dUMP residues by DNA polymerase or due to deamination of cytosine. The chain is Uracil-DNA glycosylase from Thermobifida fusca (strain YX).